We begin with the raw amino-acid sequence, 182 residues long: Thioredoxin X, chloroplastic (182 aa).

A chloroplast-targeting transit peptide spans Met1–Arg67. The Thioredoxin domain occupies Cys68–Asn177. Catalysis depends on nucleophile residues Cys99 and Cys102. Cys99 and Cys102 are joined by a disulfide.

This sequence belongs to the thioredoxin family. As to expression, predominantly expressed in leaves.

Its subcellular location is the plastid. It localises to the chloroplast stroma. Probable thiol-disulfide oxidoreductase that may participate in various redox reactions. This chain is Thioredoxin X, chloroplastic (ATHX), found in Arabidopsis thaliana (Mouse-ear cress).